Consider the following 400-residue polypeptide: Nicotinate phosphoribosyltransferase (400 aa).

Position 220 is a phosphohistidine; by autocatalysis (His-220).

Belongs to the NAPRTase family. Post-translationally, transiently phosphorylated on a His residue during the reaction cycle. Phosphorylation strongly increases the affinity for substrates and increases the rate of nicotinate D-ribonucleotide production. Dephosphorylation regenerates the low-affinity form of the enzyme, leading to product release.

The enzyme catalyses nicotinate + 5-phospho-alpha-D-ribose 1-diphosphate + ATP + H2O = nicotinate beta-D-ribonucleotide + ADP + phosphate + diphosphate. Its pathway is cofactor biosynthesis; NAD(+) biosynthesis; nicotinate D-ribonucleotide from nicotinate: step 1/1. Catalyzes the synthesis of beta-nicotinate D-ribonucleotide from nicotinate and 5-phospho-D-ribose 1-phosphate at the expense of ATP. This is Nicotinate phosphoribosyltransferase from Salmonella typhimurium (strain LT2 / SGSC1412 / ATCC 700720).